A 180-amino-acid chain; its full sequence is NADH-quinone oxidoreductase subunit I (180 aa).

2 4Fe-4S ferredoxin-type domains span residues L50–A80 and E90–D119. The [4Fe-4S] cluster site is built by C60, C63, C66, C70, C99, C102, C105, and C109.

The protein belongs to the complex I 23 kDa subunit family. As to quaternary structure, NDH-1 is composed of 14 different subunits. Subunits NuoA, H, J, K, L, M, N constitute the membrane sector of the complex. Requires [4Fe-4S] cluster as cofactor.

It is found in the cell inner membrane. The catalysed reaction is a quinone + NADH + 5 H(+)(in) = a quinol + NAD(+) + 4 H(+)(out). Functionally, NDH-1 shuttles electrons from NADH, via FMN and iron-sulfur (Fe-S) centers, to quinones in the respiratory chain. The immediate electron acceptor for the enzyme in this species is believed to be ubiquinone. Couples the redox reaction to proton translocation (for every two electrons transferred, four hydrogen ions are translocated across the cytoplasmic membrane), and thus conserves the redox energy in a proton gradient. The sequence is that of NADH-quinone oxidoreductase subunit I from Acinetobacter baumannii (strain ACICU).